Here is a 618-residue protein sequence, read N- to C-terminus: Chaperone protein dnaK (618 aa).

The interval S595 to K618 is disordered.

This sequence belongs to the heat shock protein 70 family.

It localises to the plastid. The protein resides in the cyanelle. Acts as a chaperone. This is Chaperone protein dnaK (dnaK-A) from Cyanophora paradoxa.